The following is a 916-amino-acid chain: MTQPTLKIGLWNARGLTRGSEELRIFLSDHDIDVMLTTETHMRVGQRIYLPGYLMYHAHHPSGNSRGGSAVIIKSRLCHSPLTPISTNDRQIARVHLQTSVGTVTVAAVYLPPAERWIVDDFKSMFAALGNKFIAGGDYNAKHAWWGNPRSCPRGKMLQEVIAHGQYQVLATGEPTFYSYNPLLTPSALDFFITCGYGMGRLDVQTLQELSSDHLPILAVLHATPLKKPQRVRLLAHNADINIFKTHLEQLSEVNMQILEAVDIDNATSLFMSKLSEAAQLAAPRNRHEVEAFRPLQLPSSILALLRLKRRVRKEYARTGDPRMQQIHSRLANCLHKALARRKQAQIDTFLDNLGADASTNYSLWRITKRFKAQPTPKSAIKNPSGGWCRTSLEKTEVFANNLEQRFTPYNYAPESLCRQVEEYLESPFQMSLPLSAVTLEEVKNLIAKLPLKKAPGEDLLDNRTIRLLPDQALQFLALIFNSVLDVGYFPKAWKSASIIMIHKTGKTPTDVDSYRPTSLLPSLGKIMERLILNRLLTCKDVTKAIPKFQFGFRLQHGTPEQLHRVVNFALEAMENKEYAVGAFLDIQQAFDRVWHPGLLYKAKRLFPPQLYLVVKSFLEERTFHVSVDGYKSSIKPIAAGVPQGSVLGPTLYSVFASDMPTHTPVTEVDEEDVLIATYADDTAVLTKSKSILAATSGLQEYLDAFQQWAENWNVRINAEKCANVTFANRTGSCPGVSLNGRLIRHHQAYKYLGITLDRKLTFSRHITNIQQAFRTKVARMSWLIAPRNKLSLGCKVNIYKSILAPCLFYGLQVYGIAAKSHLNKIRILQAKTLRRISGAPWYMRTRDIERDLKVPKLGDKLQNIAQKYMERLNVHPNSLARKLGTAAVVNADPRTRVKRRLKRHHPHDLPNLVLT.

In terms of domain architecture, Reverse transcriptase spans 483-757 (SVLDVGYFPK…QAYKYLGITL (275 aa)).

Mg(2+) serves as cofactor. Requires Mn(2+) as cofactor.

It carries out the reaction DNA(n) + a 2'-deoxyribonucleoside 5'-triphosphate = DNA(n+1) + diphosphate. Its activity is regulated as follows. Inactivated by sulphydryl reagent. In Drosophila melanogaster (Fruit fly), this protein is RNA-directed DNA polymerase from mobile element jockey (pol).